A 2121-amino-acid chain; its full sequence is Non-reducing polyketide synthase aoiG (2121 aa).

One can recognise a Starter acyltransferase (SAT) domain in the interval 5–258; that stretch reads YIFGDQTVRV…LPVSIYAPYH (254 aa). Positions 386-817 constitute a Ketosynthase family 3 (KS3) domain; the sequence is SSKIAIIGFS…GGNTAVLVED (432 aa). Residues C558, H693, and H735 each act as for beta-ketoacyl synthase activity in the active site. A Malonyl-CoA:ACP transacylase (MAT) domain is found at 921-1239; that stretch reads FLFTGQGAQQ…LSVLHLAGVR (319 aa). Residues 1302-1433 form an N-terminal hotdog fold region; the sequence is QKILEEEMTA…CTIELQRPHQ (132 aa). Positions 1302 to 1608 constitute a PKS/mFAS DH domain; it reads QKILEEEMTA…FQKVARRVLE (307 aa). Residue H1334 is the Proton acceptor; for dehydratase activity of the active site. The tract at residues 1461 to 1608 is C-terminal hotdog fold; sequence THKMRRGVAY…FQKVARRVLE (148 aa). The active-site Proton donor; for dehydratase activity is the D1519. The Carrier 1 domain occupies 1646–1723; that stretch reads PHVEDAWQQV…SLRIYLNMSS (78 aa). S1683 is modified (O-(pantetheine 4'-phosphoryl)serine). The span at 1728–1752 shows a compositional bias: low complexity; the sequence is DSIETSSYPTPDESTTTTITSPSGS. Residues 1728–1760 are disordered; it reads DSIETSSYPTPDESTTTTITSPSGSDRNVGRNS. In terms of domain architecture, Carrier 2 spans 1763-1840; that stretch reads DGVGTTVGLV…AITAALHAIF (78 aa). S1800 is subject to O-(pantetheine 4'-phosphoryl)serine. Residues 1872-1976 form a TE/CLC (thioesterase/Claisen cyclase) domain region; that stretch reads TLFLFPDGSG…ILIDSPNPMG (105 aa).

The cofactor is pantetheine 4'-phosphate.

Functionally, non-reducing polyketide synthase; part of the gene cluster that mediates the biosynthesis of a methylated derivative of known natural products orthosporin and diaporthin. AoiG catalyzes the biosynthesis of the hexaketide isocoumarin scaffold, via condensation of one acetyl-CoA starter unit with 6 malonyl-CoA units. An oxidoreductase that has still to be identified catalyzes the stereospecific reduction of the carbonyl moiety of the hexaketide isocoumarin scaffold to generate the S-configured secondary alcohol at C-11 of orthosporin. The methyltrasferase aoiF then catalyzes the biotransformation of not only orthosporin to diaporthin but also diaporthin to the final product, by performing a tandem methylation of the polyketide core. The chain is Non-reducing polyketide synthase aoiG from Aspergillus oryzae (strain ATCC 42149 / RIB 40) (Yellow koji mold).